A 199-amino-acid polypeptide reads, in one-letter code: Transgelin-3 (199 aa).

Residues 24-136 (ADLENKLVDW…RTLMALGSVA (113 aa)) enclose the Calponin-homology (CH) domain. Serine 163 is subject to Phosphoserine. Residues 174–199 (IGLQMGSNKGASQAGMTGYGMPRQIM) form a Calponin-like repeat. The segment covering 178–188 (MGSNKGASQAG) has biased composition (polar residues). Residues 178-199 (MGSNKGASQAGMTGYGMPRQIM) are disordered.

This sequence belongs to the calponin family.

In Bos taurus (Bovine), this protein is Transgelin-3 (TAGLN3).